A 565-amino-acid chain; its full sequence is Proline--tRNA ligase (565 aa).

It belongs to the class-II aminoacyl-tRNA synthetase family. ProS type 1 subfamily. Homodimer.

Its subcellular location is the cytoplasm. The catalysed reaction is tRNA(Pro) + L-proline + ATP = L-prolyl-tRNA(Pro) + AMP + diphosphate. Functionally, catalyzes the attachment of proline to tRNA(Pro) in a two-step reaction: proline is first activated by ATP to form Pro-AMP and then transferred to the acceptor end of tRNA(Pro). As ProRS can inadvertently accommodate and process non-cognate amino acids such as alanine and cysteine, to avoid such errors it has two additional distinct editing activities against alanine. One activity is designated as 'pretransfer' editing and involves the tRNA(Pro)-independent hydrolysis of activated Ala-AMP. The other activity is designated 'posttransfer' editing and involves deacylation of mischarged Ala-tRNA(Pro). The misacylated Cys-tRNA(Pro) is not edited by ProRS. In Lactobacillus gasseri (strain ATCC 33323 / DSM 20243 / BCRC 14619 / CIP 102991 / JCM 1131 / KCTC 3163 / NCIMB 11718 / NCTC 13722 / AM63), this protein is Proline--tRNA ligase.